A 204-amino-acid chain; its full sequence is Large ribosomal subunit protein bL17 (204 aa).

The disordered stretch occupies residues 124–204 (QAVGEAERAR…DDDGPAESKS (81 aa)). The segment covering 128–142 (EAERARGTRFSERRK) has biased composition (basic and acidic residues). Residues 156 to 191 (SESPTAAAVAAQSAEEQAPVEETLTAQAAETSAATV) are compositionally biased toward low complexity. Residues 192–204 (EETDDDGPAESKS) are compositionally biased toward acidic residues.

This sequence belongs to the bacterial ribosomal protein bL17 family. Part of the 50S ribosomal subunit. Contacts protein L32.

In Frankia alni (strain DSM 45986 / CECT 9034 / ACN14a), this protein is Large ribosomal subunit protein bL17.